A 387-amino-acid polypeptide reads, in one-letter code: Dual specificity mitogen-activated protein kinase kinase mek-2 (387 aa).

Residues Met-1–Pro-37 form a disordered region. Over residues Pro-16–Gly-25 the composition is skewed to polar residues. Low complexity predominate over residues Glu-26–Thr-35. A Protein kinase domain is found at Leu-73–Phe-360. Residues Leu-79–Val-87 and Lys-102 contribute to the ATP site. Asp-195 serves as the catalytic Proton acceptor. Phosphoserine occurs at positions 223 and 227.

It belongs to the protein kinase superfamily. STE Ser/Thr protein kinase family. MAP kinase kinase subfamily. Interacts with ksr-1.

It carries out the reaction L-seryl-[protein] + ATP = O-phospho-L-seryl-[protein] + ADP + H(+). The catalysed reaction is L-threonyl-[protein] + ATP = O-phospho-L-threonyl-[protein] + ADP + H(+). It catalyses the reaction L-tyrosyl-[protein] + ATP = O-phospho-L-tyrosyl-[protein] + ADP + H(+). Activated by tyrosine and threonine phosphorylation catalyzed by MAP kinase kinase kinases. Functions in the let-60 Ras signaling pathway; acts downstream of lin-45 raf kinase, but before the sur-1/mpk-1 gene product in controlling vulval cell differentiation. Required for progression of developing oocytes through the pachytene stage. Plays a role in responses to M.nematophilum-mediated bacterial infection by promoting tail swelling and preventing constipation. Involved in fluid homeostasis. Positively regulates lifespan upstream of mpk-1. This chain is Dual specificity mitogen-activated protein kinase kinase mek-2 (mek-2), found in Caenorhabditis elegans.